Reading from the N-terminus, the 178-residue chain is Large ribosomal subunit protein uL6 (178 aa).

The protein belongs to the universal ribosomal protein uL6 family. Part of the 50S ribosomal subunit.

Functionally, this protein binds to the 23S rRNA, and is important in its secondary structure. It is located near the subunit interface in the base of the L7/L12 stalk, and near the tRNA binding site of the peptidyltransferase center. This chain is Large ribosomal subunit protein uL6, found in Gluconobacter oxydans (strain 621H) (Gluconobacter suboxydans).